The sequence spans 269 residues: MNITRASLPMLNTTCSCRREKWNFLGRYEGTFDYWIGLHRASSKHPWMWTDNTEYNNMFVYHMNAQCLKKPEEGESSPGTGGVHSYKILQRNSLRAISPESSAKLYCCCGVIMVLTVAVVALSVALPATKTEQILINKTYAACPKNWIGVGNKCFYFSEYTSNWTFAQTFCMAQEAQLARFDNEKELNFLMRYKANFDSWIGLHRESSEHPWKWTDNTEYNNMIPIQGVETCAYLSGNGISSSRHYIPRIWICSKLNNYSLHCPTPVPV.

The Cytoplasmic segment spans residues 1–107 (MNITRASLPM…SPESSAKLYC (107 aa)). The chain crosses the membrane as a helical; Signal-anchor for type II membrane protein span at residues 108–128 (CCGVIMVLTVAVVALSVALPA). Topologically, residues 129-269 (TKTEQILINK…SLHCPTPVPV (141 aa)) are extracellular. The 105-residue stretch at 150-254 (VGNKCFYFSE…HYIPRIWICS (105 aa)) folds into the C-type lectin domain. Residue N163 is glycosylated (N-linked (GlcNAc...) asparagine). C171 and C253 form a disulfide bridge.

In terms of tissue distribution, detected in vagina, eye, tongue, stomach and spleen.

The protein resides in the cell membrane. Its function is as follows. Inhibits osteoclast formation. In Mus musculus (Mouse), this protein is C-type lectin domain family 2 member G (Clec2g).